A 388-amino-acid polypeptide reads, in one-letter code: Succinate--CoA ligase [ADP-forming] subunit beta (388 aa).

The ATP-grasp domain maps to 9 to 244 (KQLFARYGLP…PSQEDSREAH (236 aa)). ATP is bound by residues lysine 46, 53 to 55 (GRG), glutamate 99, threonine 102, and glutamate 107. Asparagine 199 and aspartate 213 together coordinate Mg(2+). Residues asparagine 264 and 321 to 323 (GIV) contribute to the substrate site.

The protein belongs to the succinate/malate CoA ligase beta subunit family. As to quaternary structure, heterotetramer of two alpha and two beta subunits. The cofactor is Mg(2+).

It carries out the reaction succinate + ATP + CoA = succinyl-CoA + ADP + phosphate. The enzyme catalyses GTP + succinate + CoA = succinyl-CoA + GDP + phosphate. Its pathway is carbohydrate metabolism; tricarboxylic acid cycle; succinate from succinyl-CoA (ligase route): step 1/1. Succinyl-CoA synthetase functions in the citric acid cycle (TCA), coupling the hydrolysis of succinyl-CoA to the synthesis of either ATP or GTP and thus represents the only step of substrate-level phosphorylation in the TCA. The beta subunit provides nucleotide specificity of the enzyme and binds the substrate succinate, while the binding sites for coenzyme A and phosphate are found in the alpha subunit. The chain is Succinate--CoA ligase [ADP-forming] subunit beta from Pectobacterium carotovorum subsp. carotovorum (strain PC1).